The following is a 158-amino-acid chain: Endoribonuclease YbeY (158 aa).

3 residues coordinate Zn(2+): H119, H123, and D129.

This sequence belongs to the endoribonuclease YbeY family. The cofactor is Zn(2+).

It localises to the cytoplasm. Functionally, single strand-specific metallo-endoribonuclease involved in late-stage 70S ribosome quality control and in maturation of the 3' terminus of the 16S rRNA. The protein is Endoribonuclease YbeY of Chlamydia felis (strain Fe/C-56) (Chlamydophila felis).